A 1292-amino-acid chain; its full sequence is Epidermal growth factor receptor (1292 aa).

Residues 1–641 (MYNNYNLCHI…AGLIENELQP (641 aa)) are Extracellular-facing. 7 N-linked (GlcNAc...) asparagine glycosylation sites follow: Asn31, Asn224, Asn263, Asn323, Asn342, Asn600, and Asn605. Residues 642–662 (AILAGVAVFALAFLVVAAIIM) form a helical membrane-spanning segment. The Cytoplasmic portion of the chain corresponds to 663–1292 (YFWRVRAKAK…KPLRKNETTV (630 aa)). Thr675 bears the Phosphothreonine; by PKC mark. A Protein kinase domain is found at 711–978 (MRKGGILGYG…KMSRDPGRYL (268 aa)). Residues 717-725 (LGYGAFGNV) and Lys744 each bind ATP. Residue Asp836 is the Proton acceptor of the active site. Residues 1022-1066 (PKSRAPIPPGLSASSTSGSPPNTPVKPCWPNGKPLAADSPTPQNQ) are disordered. At Tyr1166 the chain carries Phosphotyrosine; by autocatalysis. Residues 1253 to 1292 (SQVRQRSSEEESDHEYYNDFDRLERELQPLKPLRKNETTV) are disordered. Residues 1258-1292 (RSSEEESDHEYYNDFDRLERELQPLKPLRKNETTV) are compositionally biased toward basic and acidic residues.

It belongs to the protein kinase superfamily. Tyr protein kinase family. EGF receptor subfamily.

It localises to the membrane. It carries out the reaction L-tyrosyl-[protein] + ATP = O-phospho-L-tyrosyl-[protein] + ADP + H(+). Activated by MRJP1 during queen determination of honeybee larvae. Its function is as follows. Upon binding to its ligands, transduces the signal through the ras-raf-MAPK pathway and is involved in a myriad of developmental decisions. Involved in the determination of adult size, ovary development, and development timing, especially during queen determination of honeybee larvae. May have an important role in the prolongation of longevity in queens. The protein is Epidermal growth factor receptor (Egfr) of Apis mellifera (Honeybee).